A 146-amino-acid polypeptide reads, in one-letter code: Hemoglobin subunit beta (146 aa).

The region spanning 2 to 146 (FLTPEENGHV…VANALAHKYH (145 aa)) is the Globin domain. At threonine 12 the chain carries Phosphothreonine. Serine 44 bears the Phosphoserine mark. Residue lysine 59 is modified to N6-acetyllysine. Histidine 63 is a heme b binding site. N6-acetyllysine is present on lysine 82. A heme b-binding site is contributed by histidine 92. Cysteine 93 carries the post-translational modification S-nitrosocysteine. Lysine 144 carries the N6-acetyllysine modification.

The protein belongs to the globin family. As to quaternary structure, heterotetramer of two alpha chains and two beta chains. In terms of tissue distribution, red blood cells.

Functionally, involved in oxygen transport from the lung to the various peripheral tissues. This chain is Hemoglobin subunit beta (HBB), found in Hapalemur griseus (Gray gentle lemur).